The primary structure comprises 74 residues: Exodeoxyribonuclease 7 small subunit (74 aa).

This sequence belongs to the XseB family. As to quaternary structure, heterooligomer composed of large and small subunits.

The protein localises to the cytoplasm. The enzyme catalyses Exonucleolytic cleavage in either 5'- to 3'- or 3'- to 5'-direction to yield nucleoside 5'-phosphates.. Its function is as follows. Bidirectionally degrades single-stranded DNA into large acid-insoluble oligonucleotides, which are then degraded further into small acid-soluble oligonucleotides. The sequence is that of Exodeoxyribonuclease 7 small subunit from Symbiobacterium thermophilum (strain DSM 24528 / JCM 14929 / IAM 14863 / T).